The sequence spans 372 residues: Probable inactive receptor-like protein kinase At1g65250 (372 aa).

Residues 1-4 (MGWL) and Lys38 each bind ATP. The region spanning 1–314 (MGWLRKKKKP…QERCQMKAFL (314 aa)) is the Protein kinase domain. Tyr128 and Tyr221 each carry phosphotyrosine. A disordered region spans residues 348–372 (SSSLSSGQTQLDSAQDISSTVVLSN). A compositionally biased stretch (polar residues) spans 354–372 (GQTQLDSAQDISSTVVLSN).

It belongs to the protein kinase superfamily.

The polypeptide is Probable inactive receptor-like protein kinase At1g65250 (Arabidopsis thaliana (Mouse-ear cress)).